A 374-amino-acid polypeptide reads, in one-letter code: tRNA-specific 2-thiouridylase MnmA (374 aa).

Residues 13–20 (GMSGGVDS) and methionine 39 contribute to the ATP site. Residues 99-101 (NPD) are interaction with target base in tRNA. The active-site Nucleophile is cysteine 104. A disulfide bridge links cysteine 104 with cysteine 201. Glycine 128 contributes to the ATP binding site. The tract at residues 151–153 (KDQ) is interaction with tRNA. Catalysis depends on cysteine 201, which acts as the Cysteine persulfide intermediate. The segment at 313–314 (RY) is interaction with tRNA.

It belongs to the MnmA/TRMU family.

The protein localises to the cytoplasm. The catalysed reaction is S-sulfanyl-L-cysteinyl-[protein] + uridine(34) in tRNA + AH2 + ATP = 2-thiouridine(34) in tRNA + L-cysteinyl-[protein] + A + AMP + diphosphate + H(+). Its function is as follows. Catalyzes the 2-thiolation of uridine at the wobble position (U34) of tRNA, leading to the formation of s(2)U34. This chain is tRNA-specific 2-thiouridylase MnmA, found in Streptococcus suis (strain 98HAH33).